A 137-amino-acid polypeptide reads, in one-letter code: Ribonuclease VapC3 (137 aa).

One can recognise a PINc domain in the interval 12–129 (VVVDASAMVD…LTTDERLARA (118 aa)). Residues aspartate 15 and aspartate 105 each coordinate Mg(2+).

The protein belongs to the PINc/VapC protein family. The cofactor is Mg(2+).

Functionally, toxic component of a type II toxin-antitoxin (TA) system. An RNase. Its toxic effect is neutralized by coexpression with cognate antitoxin VapB3. This chain is Ribonuclease VapC3, found in Mycobacterium tuberculosis (strain CDC 1551 / Oshkosh).